A 280-amino-acid chain; its full sequence is Tryptophan synthase alpha chain (280 aa).

Active-site proton acceptor residues include E49 and D60.

It belongs to the TrpA family. In terms of assembly, tetramer of two alpha and two beta chains.

It catalyses the reaction (1S,2R)-1-C-(indol-3-yl)glycerol 3-phosphate + L-serine = D-glyceraldehyde 3-phosphate + L-tryptophan + H2O. Its pathway is amino-acid biosynthesis; L-tryptophan biosynthesis; L-tryptophan from chorismate: step 5/5. In terms of biological role, the alpha subunit is responsible for the aldol cleavage of indoleglycerol phosphate to indole and glyceraldehyde 3-phosphate. This is Tryptophan synthase alpha chain from Corynebacterium glutamicum (strain R).